Consider the following 556-residue polypeptide: Portal protein (556 aa).

The disordered stretch occupies residues 527–556 (AQGAKTLSETQTSDPSALTAIANAAGAPQQ). Positions 533–542 (LSETQTSDPS) are enriched in polar residues.

The protein belongs to the podoviridae head-to-tail connector protein family. As to quaternary structure, homododecamer.

The protein resides in the virion. Forms the portal vertex of the capsid. This portal plays critical roles in head assembly, genome packaging, neck/tail attachment, and genome ejection. The portal protein multimerizes as a single ring-shaped homododecamer arranged around a central channel. This Salmonella phage epsilon15 protein is Portal protein.